Reading from the N-terminus, the 354-residue chain is Protein-glutamate methylesterase/protein-glutamine glutaminase (354 aa).

Residues 7–124 (KVLCVDDSAL…REGMLEYTEM (118 aa)) enclose the Response regulatory domain. Aspartate 58 is modified (4-aspartylphosphate). In terms of domain architecture, CheB-type methylesterase spans 156–348 (LLSSEKVIII…AALMKRAEAS (193 aa)). Active-site residues include serine 168, histidine 194, and aspartate 290.

It belongs to the CheB family. Phosphorylated by CheA. Phosphorylation of the N-terminal regulatory domain activates the methylesterase activity.

The protein resides in the cytoplasm. It catalyses the reaction [protein]-L-glutamate 5-O-methyl ester + H2O = L-glutamyl-[protein] + methanol + H(+). The catalysed reaction is L-glutaminyl-[protein] + H2O = L-glutamyl-[protein] + NH4(+). Its function is as follows. Involved in chemotaxis. Part of a chemotaxis signal transduction system that modulates chemotaxis in response to various stimuli. Catalyzes the demethylation of specific methylglutamate residues introduced into the chemoreceptors (methyl-accepting chemotaxis proteins or MCP) by CheR. Also mediates the irreversible deamidation of specific glutamine residues to glutamic acid. The chain is Protein-glutamate methylesterase/protein-glutamine glutaminase from Chromohalobacter salexigens (strain ATCC BAA-138 / DSM 3043 / CIP 106854 / NCIMB 13768 / 1H11).